The sequence spans 213 residues: Kynurenine formamidase (213 aa).

Trp-18 serves as a coordination point for substrate. Residues His-48, His-52, and Asp-54 each coordinate Zn(2+). The active-site Proton donor/acceptor is the His-58. Positions 160 and 172 each coordinate Zn(2+).

Belongs to the Cyclase 1 superfamily. KynB family. As to quaternary structure, homodimer. It depends on Zn(2+) as a cofactor.

The catalysed reaction is N-formyl-L-kynurenine + H2O = L-kynurenine + formate + H(+). Its pathway is amino-acid degradation; L-tryptophan degradation via kynurenine pathway; L-kynurenine from L-tryptophan: step 2/2. Its function is as follows. Catalyzes the hydrolysis of N-formyl-L-kynurenine to L-kynurenine, the second step in the kynurenine pathway of tryptophan degradation. This Burkholderia ambifaria (strain MC40-6) protein is Kynurenine formamidase.